The chain runs to 2238 residues: Golgin subfamily A member 4 (2238 aa).

Residues 1 to 90 (MFKKLKQKIS…QTFAQKLQLR (90 aa)) are disordered. Serine 10 is subject to Phosphoserine. Positions 12–41 (EQQQLQQALAPAQASSSSSTPTRTRSRTSS) are enriched in low complexity. Residue threonine 39 is modified to Phosphothreonine. Position 41 is a phosphoserine (serine 41). Composition is skewed to polar residues over residues 52–62 (NRENASTQATK) and 73–85 (SPSQ…TFAQ). 2 positions are modified to phosphoserine: serine 93 and serine 100. Disordered regions lie at residues 132–154 (AAAF…NSDG), 1695–1744 (LKER…SQDC), and 1770–1789 (LEQG…HRAL). The interaction with MACF1 stretch occupies residues 154 to 224 (GLSREQLLQR…EELQMDQQAK (71 aa)). Residues 156–2161 (SREQLLQRLR…RYEKNACAAT (2006 aa)) adopt a coiled-coil conformation. Over residues 1695–1711 (LKEREKQVHSLEDKLKN) the composition is skewed to basic and acidic residues. The 48-residue stretch at 2178-2225 (LFGEPTEFEYLRKVMFEYMMGRETKTMAKVITTVLKFPDDQAQKILER) folds into the GRIP domain.

In terms of assembly, homodimer. Interacts with GTP-bound ARL1 and ARL3. Interacts with MACF1. Directly interacts with TBC1D23. Interacts with FAM91A1; this interaction may be mediated by TBC1D23. In terms of tissue distribution, ubiquitous. Highly expressed in oligodendrocyte precursors, particularly at a stage just prior to myelination.

The protein resides in the cytoplasm. It localises to the golgi apparatus membrane. Its subcellular location is the golgi apparatus. It is found in the trans-Golgi network membrane. Its function is as follows. Involved in vesicular trafficking at the Golgi apparatus level. May play a role in delivery of transport vesicles containing GPI-linked proteins from the trans-Golgi network through its interaction with MACF1. Involved in endosome-to-Golgi trafficking. This chain is Golgin subfamily A member 4 (Golga4), found in Mus musculus (Mouse).